Consider the following 878-residue polypeptide: Leucine--tRNA ligase (878 aa).

The 'HIGH' region motif lies at 56-66; sequence PYPSGKLHMGH. The 'KMSKS' region signature appears at 630-634; sequence KMSKS. ATP is bound at residue lysine 633.

Belongs to the class-I aminoacyl-tRNA synthetase family.

The protein localises to the cytoplasm. It catalyses the reaction tRNA(Leu) + L-leucine + ATP = L-leucyl-tRNA(Leu) + AMP + diphosphate. The polypeptide is Leucine--tRNA ligase (Prochlorococcus marinus (strain MIT 9313)).